The following is a 529-amino-acid chain: Intraflagellar transport protein 56 (529 aa).

The disordered stretch occupies residues 1–21 (MLHNRMTTAFERSKEQEHEAA). The segment covering 11–21 (ERSKEQEHEAA) has biased composition (basic and acidic residues). 6 TPR repeats span residues 57 to 90 (GNADLWIAYCNFHLGRHEEALEIYTALKKSKNPP), 154 to 187 (SADQMALAAVHFLRTHYQQALECYEEVLQVQPEC), 189 to 221 (AIYMHMALCYYKLGDYLKSEEFLMLYRENAEDS), 285 to 321 (SEARQNLVKLYIEKGQYEDAYKVVQSFEPAVSAEYTL), 359 to 392 (VLGRRAMAAAYFLTGEFEEASMYLESIADIPKES), and 428 to 461 (PVHRTWLGRLLIRAQRSAEAFDLYRDAEKNSLQT).

The protein belongs to the IFT56 family.

It localises to the cell projection. Its subcellular location is the cilium. The protein resides in the flagellum. It is found in the cytoplasm. The protein localises to the cytoskeleton. It localises to the flagellum axoneme. Its subcellular location is the flagellum basal body. Its function is as follows. Component of the intraflagellar transport complex B (IFT-B) involved in flagellar assembly. In Giardia intestinalis (strain ATCC 50803 / WB clone C6) (Giardia lamblia), this protein is Intraflagellar transport protein 56.